Reading from the N-terminus, the 83-residue chain is Mu-theraphotoxin-Hhn2j 4 (83 aa).

Positions 1–21 are cleaved as a signal peptide; that stretch reads MKASMFLALAGSVLLFVVGYA. Residues 22 to 48 constitute a propeptide that is removed on maturation; it reads SESEEKEFPIELLSKIFAVDVFKGEER. 3 cysteine pairs are disulfide-bonded: Cys50-Cys65, Cys57-Cys70, and Cys64-Cys77. Position 81 is a leucine amide (Leu81).

The protein belongs to the neurotoxin 10 (Hwtx-1) family. 15 (Hntx-3) subfamily. In terms of assembly, monomer. Expressed by the venom gland.

It is found in the secreted. In terms of biological role, lethal neurotoxin. Selectively blocks tetrodotoxin-sensitive voltage-gated sodium channels (Nav). Does not affect tetrodotoxin-resistant voltage-gated sodium channels or calcium channels. This chain is Mu-theraphotoxin-Hhn2j 4, found in Cyriopagopus hainanus (Chinese bird spider).